The primary structure comprises 473 residues: Cysteine--tRNA ligase (473 aa).

Residue Cys30 coordinates Zn(2+). Positions 32 to 42 (MTVYDYCHIGH) match the 'HIGH' region motif. Positions 213, 238, and 242 each coordinate Zn(2+). A 'KMSKS' region motif is present at residues 270–274 (KMSKS). Lys273 is an ATP binding site.

Belongs to the class-I aminoacyl-tRNA synthetase family. As to quaternary structure, monomer. The cofactor is Zn(2+).

Its subcellular location is the cytoplasm. The enzyme catalyses tRNA(Cys) + L-cysteine + ATP = L-cysteinyl-tRNA(Cys) + AMP + diphosphate. The sequence is that of Cysteine--tRNA ligase from Acinetobacter baylyi (strain ATCC 33305 / BD413 / ADP1).